The sequence spans 243 residues: Small ribosomal subunit protein mS23 (243 aa).

It belongs to the mitochondrion-specific ribosomal protein mS23 family. In terms of assembly, component of the mitochondrial small ribosomal subunit.

The protein resides in the mitochondrion. In Emericella nidulans (strain FGSC A4 / ATCC 38163 / CBS 112.46 / NRRL 194 / M139) (Aspergillus nidulans), this protein is Small ribosomal subunit protein mS23 (rsm25).